A 212-amino-acid polypeptide reads, in one-letter code: uncharacterized protein (212 aa).

The NERD domain maps to 29 to 146 (KGKAGEKLVK…AAFHPKCSLK (118 aa)).

This is an uncharacterized protein from Bacillus anthracis.